Here is a 460-residue protein sequence, read N- to C-terminus: UDP-N-acetylmuramoylalanine--D-glutamate ligase (460 aa).

120–126 contacts ATP; it reads GSNGKTT.

Belongs to the MurCDEF family.

Its subcellular location is the cytoplasm. The enzyme catalyses UDP-N-acetyl-alpha-D-muramoyl-L-alanine + D-glutamate + ATP = UDP-N-acetyl-alpha-D-muramoyl-L-alanyl-D-glutamate + ADP + phosphate + H(+). The protein operates within cell wall biogenesis; peptidoglycan biosynthesis. In terms of biological role, cell wall formation. Catalyzes the addition of glutamate to the nucleotide precursor UDP-N-acetylmuramoyl-L-alanine (UMA). The sequence is that of UDP-N-acetylmuramoylalanine--D-glutamate ligase from Lactobacillus johnsonii (strain CNCM I-12250 / La1 / NCC 533).